A 612-amino-acid chain; its full sequence is DNA damage checkpoint protein 1 (612 aa).

Position 436 is a phosphoserine (serine 436). Residues 576–612 (GLLNSQNDTSNHKKQDNKEMEDGLGLTQVEKPRGIFD) are disordered. Residues 585 to 596 (SNHKKQDNKEME) show a composition bias toward basic and acidic residues.

Belongs to the DDC1 family. In terms of assembly, component of the checkpoint clamp complex composed of DDC1, MEC3 and RAD17. The interaction with MEC3 is performed in a RAD17-dependent manner. The checkpoint clamp complex loads onto DNA in an ATP-dependent manner through its interaction with the RFC-RAD4 checkpoint clamp loader complex. Interacts with the DNA polymerase zeta subunit REV7 and DPB11. In terms of processing, phosphorylated during cell cycle S-phase and in response to DNA damage. This phosphorylation is MEC14 dependent. Also hosphorylated by CDC28.

It is found in the cytoplasm. Its subcellular location is the nucleus. Its function is as follows. Component of the checkpoint clamp complex involved in the surveillance mechanism that allows the DNA repair pathways to act to restore the integrity of the DNA prior to DNA synthesis or separation of the replicated chromosomes. Associates with sites of DNA damage and modulates the MEC1 signaling pathway and the activation of RAD53 in response to DNA damage at phase G1. The complex also physically regulates DNA polymerase zeta-dependent mutagenesis by controlling the access of polymerase zeta to damaged DNA. The sequence is that of DNA damage checkpoint protein 1 (DDC1) from Saccharomyces cerevisiae (strain ATCC 204508 / S288c) (Baker's yeast).